A 483-amino-acid chain; its full sequence is Regulatory protein ViaA (483 aa).

The protein belongs to the ViaA family. As to quaternary structure, homodimer. Interacts with RavA.

The protein resides in the cytoplasm. Component of the RavA-ViaA chaperone complex, which may act on the membrane to optimize the function of some of the respiratory chains. ViaA stimulates the ATPase activity of RavA. The protein is Regulatory protein ViaA of Shigella sonnei (strain Ss046).